Consider the following 214-residue polypeptide: Phosphoenolpyruvate guanylyltransferase (214 aa).

Positions 139, 155, and 158 each coordinate phosphoenolpyruvate.

Belongs to the CofC family.

It carries out the reaction phosphoenolpyruvate + GTP + H(+) = enolpyruvoyl-2-diphospho-5'-guanosine + diphosphate. Its pathway is cofactor biosynthesis; coenzyme F420 biosynthesis. Guanylyltransferase that catalyzes the activation of phosphoenolpyruvate (PEP) as enolpyruvoyl-2-diphospho-5'-guanosine, via the condensation of PEP with GTP. It is involved in the biosynthesis of coenzyme F420, a hydride carrier cofactor. The chain is Phosphoenolpyruvate guanylyltransferase from Salinispora arenicola (strain CNS-205).